A 106-amino-acid chain; its full sequence is Pyruvate decarboxylase 2 (106 aa).

Positions 10 and 12 each coordinate Mg(2+).

It belongs to the TPP enzyme family. In terms of assembly, homotetramer. A metal cation is required as a cofactor. Thiamine diphosphate serves as cofactor.

The enzyme catalyses a 2-oxocarboxylate + H(+) = an aldehyde + CO2. The protein is Pyruvate decarboxylase 2 (PDC2) of Zea mays (Maize).